A 104-amino-acid polypeptide reads, in one-letter code: Large ribosomal subunit protein uL24 (104 aa).

Belongs to the universal ribosomal protein uL24 family. In terms of assembly, part of the 50S ribosomal subunit.

Its function is as follows. One of two assembly initiator proteins, it binds directly to the 5'-end of the 23S rRNA, where it nucleates assembly of the 50S subunit. One of the proteins that surrounds the polypeptide exit tunnel on the outside of the subunit. The polypeptide is Large ribosomal subunit protein uL24 (Clostridium botulinum (strain Alaska E43 / Type E3)).